The sequence spans 319 residues: Lipoyl synthase (319 aa).

Residues 5–31 form a disordered region; it reads LDTISANPVRPRHPEKANRPDALSPPK. Cys-61, Cys-66, Cys-72, Cys-87, Cys-91, Cys-94, and Ser-300 together coordinate [4Fe-4S] cluster. The region spanning 73 to 289 is the Radical SAM core domain; sequence WDKKHATFMI…ETVAYTKGFL (217 aa).

It belongs to the radical SAM superfamily. Lipoyl synthase family. Requires [4Fe-4S] cluster as cofactor.

It is found in the cytoplasm. It carries out the reaction [[Fe-S] cluster scaffold protein carrying a second [4Fe-4S](2+) cluster] + N(6)-octanoyl-L-lysyl-[protein] + 2 oxidized [2Fe-2S]-[ferredoxin] + 2 S-adenosyl-L-methionine + 4 H(+) = [[Fe-S] cluster scaffold protein] + N(6)-[(R)-dihydrolipoyl]-L-lysyl-[protein] + 4 Fe(3+) + 2 hydrogen sulfide + 2 5'-deoxyadenosine + 2 L-methionine + 2 reduced [2Fe-2S]-[ferredoxin]. It functions in the pathway protein modification; protein lipoylation via endogenous pathway; protein N(6)-(lipoyl)lysine from octanoyl-[acyl-carrier-protein]: step 2/2. Its function is as follows. Catalyzes the radical-mediated insertion of two sulfur atoms into the C-6 and C-8 positions of the octanoyl moiety bound to the lipoyl domains of lipoate-dependent enzymes, thereby converting the octanoylated domains into lipoylated derivatives. This Nitrobacter winogradskyi (strain ATCC 25391 / DSM 10237 / CIP 104748 / NCIMB 11846 / Nb-255) protein is Lipoyl synthase.